Here is a 359-residue protein sequence, read N- to C-terminus: E3 ubiquitin-protein ligase RNF146 (359 aa).

An RING-type zinc finger spans residues 38 to 76 (CAICLQTCVHPVSLPCKHVFCYLCVKGASWLGKRCALCR). Residues K86 and K96 each participate in a glycyl lysine isopeptide (Lys-Gly) (interchain with G-Cter in ubiquitin) cross-link. In terms of domain architecture, WWE spans 93–169 (EELKAASRGN…EHGRRRKIKR (77 aa)). The a glycoprotein site is built by Y109, R112, and W116. K132 is covalently cross-linked (Glycyl lysine isopeptide (Lys-Gly) (interchain with G-Cter in ubiquitin)). Y146, Q155, R165, and K177 together coordinate a glycoprotein. Residue K177 forms a Glycyl lysine isopeptide (Lys-Gly) (interchain with G-Cter in ubiquitin) linkage. 2 disordered regions span residues 197-243 (SSAD…DAGI) and 261-359 (ERSH…VTEV). The segment covering 199–212 (ADGADSGSAQTGAS) has biased composition (low complexity). The segment covering 217 to 235 (VPSSTRPLTSVDGQLTSPV) has biased composition (polar residues). Positions 284-298 (SVEETESDASSDSED) are enriched in acidic residues. Phosphoserine is present on residues S290 and S294. The span at 306–324 (HSLTQQRPLVPNGNQTVAD) shows a compositional bias: polar residues.

As to quaternary structure, can form homooligomers. Interacts with PARsylated AXIN1, AXIN2, BLZF1, CASC3, H1-2, IPO7, LIG3, NCL, PARP1, XRCC1, XRCC5 and XRCC6. Interacts with DDB1, DHX15, IQGAP1, LRPPRC, PARP2, PRKDC, RUVBL2, TNKS1 and TNKS2. Binding often leads to interactor ubiquitination, in the presence of the appropriate E1 and E2 enzymes, and proteasomal degradation. Post-translationally, ubiquitinated; autoubiquitinated. Autoubiquitination is enhanced upon PAR-binding. Expressed at relatively high levels in the brain. Also present in spleen, heart, kidney, testis and liver. In the brain, expressed in the cerebellum, hippocampus, striatum, cortex, frontal cortex and, at lowest levels, in olfactory bulb (at protein level). Predominantly expressed in neurons.

It is found in the cytoplasm. Its subcellular location is the cytosol. It localises to the nucleus. The catalysed reaction is S-ubiquitinyl-[E2 ubiquitin-conjugating enzyme]-L-cysteine + [acceptor protein]-L-lysine = [E2 ubiquitin-conjugating enzyme]-L-cysteine + N(6)-ubiquitinyl-[acceptor protein]-L-lysine.. It participates in protein modification; protein ubiquitination. In terms of biological role, E3 ubiquitin-protein ligase that specifically binds poly-ADP-ribosylated (PARsylated) proteins and mediates their ubiquitination and subsequent degradation. May regulate many important biological processes, such as cell survival and DNA damage response. Acts as an activator of the Wnt signaling pathway by mediating the ubiquitination of PARsylated AXIN1 and AXIN2, 2 key components of the beta-catenin destruction complex. Acts in cooperation with tankyrase proteins (TNKS and TNKS2), which mediate PARsylation of target proteins AXIN1, AXIN2, BLZF1, CASC3, TNKS and TNKS2. Recognizes and binds tankyrase-dependent PARsylated proteins via its WWE domain and mediates their ubiquitination, leading to their degradation. Different ubiquitin linkage types have been observed: TNKS2 undergoes ubiquitination at 'Lys-48' and 'Lys-63', while AXIN1 is only ubiquitinated at 'Lys-48'. May regulate TNKS and TNKS2 subcellular location, preventing aggregation at a centrosomal location. Neuroprotective protein. Protects the brain against N-methyl-D-aspartate (NMDA) receptor-mediated glutamate excitotoxicity and ischemia, by interfering with PAR-induced cell death, called parthanatos. Prevents nuclear translocation of AIFM1 in a PAR-binding dependent manner. Does not affect PARP1 activation. Protects against cell death induced by DNA damaging agents, such as N-methyl-N-nitro-N-nitrosoguanidine (MNNG) and rescues cells from G1 arrest. Promotes cell survival after gamma-irradiation. Facilitates DNA repair. The chain is E3 ubiquitin-protein ligase RNF146 (Rnf146) from Mus musculus (Mouse).